Consider the following 292-residue polypeptide: N-acetylneuraminate lyase (292 aa).

S46 and T47 together coordinate aceneuramate. The Proton donor role is filled by Y135. The active-site Schiff-base intermediate with substrate is K163. Residues T165, G187, D189, E190, and S206 each coordinate aceneuramate.

Belongs to the DapA family. NanA subfamily. In terms of assembly, homotetramer.

The protein resides in the cytoplasm. It carries out the reaction aceneuramate = aldehydo-N-acetyl-D-mannosamine + pyruvate. The protein operates within amino-sugar metabolism; N-acetylneuraminate degradation; D-fructose 6-phosphate from N-acetylneuraminate: step 1/5. Functionally, catalyzes the reversible aldol cleavage of N-acetylneuraminic acid (sialic acid; Neu5Ac) to form pyruvate and N-acetylmannosamine (ManNAc) via a Schiff base intermediate. This chain is N-acetylneuraminate lyase, found in Lactiplantibacillus plantarum (strain ATCC BAA-793 / NCIMB 8826 / WCFS1) (Lactobacillus plantarum).